Consider the following 1807-residue polypeptide: Phospholipase D (1807 aa).

Positions 1–28 (MPGPDDDVREPTAAARTNNSGYGLRAAP) are disordered. 3 helical membrane passes run 257-277 (IAFVSAIVGFIFPICLVIVTS), 305-325 (AGVFLGLAVLGGILFFAVFVY), and 587-607 (VYYILFLFAGGIIAPVVGFLA). Residues 697–734 (TASRMGTGNLAPASSRVDSSTQSEDSFEAPKPPPSSVS) form a disordered region. PLD phosphodiesterase domains are found at residues 853–880 (GFWSHHEKIVCIDQSLAFVGGLDLCFGR) and 1249–1276 (EQIYIHSKLMIADDRCAILGSANINDRS). Active-site residues include histidine 858, lysine 860, aspartate 865, histidine 1254, lysine 1256, and aspartate 1261. Polar residues-rich tracts occupy residues 1531–1547 (FSRSNSVSTPTNFSQLD), 1568–1578 (YNSNSMPSNAS), and 1597–1614 (YPNSPSVASFQHTPQSPA). Positions 1531–1621 (FSRSNSVSTP…SPAIATGARS (91 aa)) are disordered.

The protein belongs to the phospholipase D family. TM-PLD subfamily.

Its subcellular location is the membrane. It catalyses the reaction a 1,2-diacyl-sn-glycero-3-phosphocholine + H2O = a 1,2-diacyl-sn-glycero-3-phosphate + choline + H(+). Hydrolyzes glycerol-phospholipids at the terminal phosphodiesteric bond. The polypeptide is Phospholipase D (Phytophthora infestans (Potato late blight agent)).